Here is a 389-residue protein sequence, read N- to C-terminus: D-alanine--D-alanine ligase (389 aa).

Polar residues predominate over residues 1–12; sequence MSTENLPQNPEQ. The disordered stretch occupies residues 1-22; that stretch reads MSTENLPQNPEQSPRRPPRKPR. Residues 169-379 form the ATP-grasp domain; sequence KAVFTSYGLK…YPELVDRLVQ (211 aa). 205–260 is a binding site for ATP; sequence AGEHGWPLFVKPARAGSSIGITKVDDLAGLDEAIEEARRHDPKILVEAALRGREIE. D333, E346, and N348 together coordinate Mg(2+).

It belongs to the D-alanine--D-alanine ligase family. Requires Mg(2+) as cofactor. The cofactor is Mn(2+).

It is found in the cytoplasm. The enzyme catalyses 2 D-alanine + ATP = D-alanyl-D-alanine + ADP + phosphate + H(+). It functions in the pathway cell wall biogenesis; peptidoglycan biosynthesis. Functionally, cell wall formation. The sequence is that of D-alanine--D-alanine ligase (ddl) from Streptomyces coelicolor (strain ATCC BAA-471 / A3(2) / M145).